Consider the following 178-residue polypeptide: Large ribosomal subunit protein bL25 (178 aa).

Belongs to the bacterial ribosomal protein bL25 family. CTC subfamily. As to quaternary structure, part of the 50S ribosomal subunit; part of the 5S rRNA/L5/L18/L25 subcomplex. Contacts the 5S rRNA. Binds to the 5S rRNA independently of L5 and L18.

In terms of biological role, this is one of the proteins that binds to the 5S RNA in the ribosome where it forms part of the central protuberance. This chain is Large ribosomal subunit protein bL25, found in Campylobacter jejuni subsp. jejuni serotype O:23/36 (strain 81-176).